A 564-amino-acid chain; its full sequence is Arginine--tRNA ligase (564 aa).

The 'HIGH' region motif lies at 136–146 (ANPTGPLHMGN).

Belongs to the class-I aminoacyl-tRNA synthetase family. In terms of assembly, monomer.

It localises to the cytoplasm. It catalyses the reaction tRNA(Arg) + L-arginine + ATP = L-arginyl-tRNA(Arg) + AMP + diphosphate. In Ruminiclostridium cellulolyticum (strain ATCC 35319 / DSM 5812 / JCM 6584 / H10) (Clostridium cellulolyticum), this protein is Arginine--tRNA ligase.